The chain runs to 508 residues: Glycerol kinase (508 aa).

Position 15 (Thr-15) interacts with ADP. Thr-15, Ser-16, and Ser-17 together coordinate ATP. Thr-15 is a sn-glycerol 3-phosphate binding site. An ADP-binding site is contributed by Arg-19. 4 residues coordinate sn-glycerol 3-phosphate: Arg-85, Glu-86, Tyr-138, and Asp-251. Arg-85, Glu-86, Tyr-138, Asp-251, and Gln-252 together coordinate glycerol. ADP-binding residues include Thr-273, Gly-317, and Gly-419. Residues Thr-273, Gly-317, and Gly-419 each coordinate ATP.

The protein belongs to the FGGY kinase family.

The enzyme catalyses glycerol + ATP = sn-glycerol 3-phosphate + ADP + H(+). Its pathway is polyol metabolism; glycerol degradation via glycerol kinase pathway; sn-glycerol 3-phosphate from glycerol: step 1/1. Its activity is regulated as follows. Inhibited by fructose 1,6-bisphosphate (FBP). In terms of biological role, key enzyme in the regulation of glycerol uptake and metabolism. Catalyzes the phosphorylation of glycerol to yield sn-glycerol 3-phosphate. The polypeptide is Glycerol kinase (Mycoplasma genitalium (strain ATCC 33530 / DSM 19775 / NCTC 10195 / G37) (Mycoplasmoides genitalium)).